A 416-amino-acid chain; its full sequence is Multifunctional CCA protein (416 aa).

ATP-binding residues include Gly-8 and Arg-11. Residues Gly-8 and Arg-11 each contribute to the CTP site. Mg(2+) contacts are provided by Asp-21 and Asp-23. Residues Arg-91, Arg-137, and Arg-140 each contribute to the ATP site. Residues Arg-91, Arg-137, and Arg-140 each contribute to the CTP site. The region spanning 228–329 (TGLHTMLVLA…IKLFDKADFW (102 aa)) is the HD domain.

It belongs to the tRNA nucleotidyltransferase/poly(A) polymerase family. Bacterial CCA-adding enzyme type 1 subfamily. Monomer. Can also form homodimers and oligomers. The cofactor is Mg(2+). It depends on Ni(2+) as a cofactor.

It carries out the reaction a tRNA precursor + 2 CTP + ATP = a tRNA with a 3' CCA end + 3 diphosphate. The enzyme catalyses a tRNA with a 3' CCA end + 2 CTP + ATP = a tRNA with a 3' CCACCA end + 3 diphosphate. In terms of biological role, catalyzes the addition and repair of the essential 3'-terminal CCA sequence in tRNAs without using a nucleic acid template. Adds these three nucleotides in the order of C, C, and A to the tRNA nucleotide-73, using CTP and ATP as substrates and producing inorganic pyrophosphate. tRNA 3'-terminal CCA addition is required both for tRNA processing and repair. Also involved in tRNA surveillance by mediating tandem CCA addition to generate a CCACCA at the 3' terminus of unstable tRNAs. While stable tRNAs receive only 3'-terminal CCA, unstable tRNAs are marked with CCACCA and rapidly degraded. This is Multifunctional CCA protein from Shewanella sp. (strain ANA-3).